Reading from the N-terminus, the 283-residue chain is tRNA pseudouridine synthase B (283 aa).

Aspartate 38 acts as the Nucleophile in catalysis.

Belongs to the pseudouridine synthase TruB family. Type 1 subfamily.

It catalyses the reaction uridine(55) in tRNA = pseudouridine(55) in tRNA. Functionally, responsible for synthesis of pseudouridine from uracil-55 in the psi GC loop of transfer RNAs. The polypeptide is tRNA pseudouridine synthase B (Onion yellows phytoplasma (strain OY-M)).